Consider the following 767-residue polypeptide: 5-methyltetrahydropteroyltriglutamate--homocysteine methyltransferase (767 aa).

5-methyltetrahydropteroyltri-L-glutamate-binding positions include arginine 17–lysine 20 and lysine 117. Residues isoleucine 441–serine 443 and glutamate 494 each bind L-homocysteine. L-methionine-binding positions include isoleucine 441–serine 443 and glutamate 494. 5-methyltetrahydropteroyltri-L-glutamate-binding positions include arginine 525 to cysteine 526 and tryptophan 571. L-homocysteine is bound at residue aspartate 609. Aspartate 609 serves as a coordination point for L-methionine. Glutamate 615 serves as a coordination point for 5-methyltetrahydropteroyltri-L-glutamate. Zn(2+) is bound by residues histidine 652, cysteine 654, and glutamate 676. Catalysis depends on histidine 705, which acts as the Proton donor. Cysteine 737 is a Zn(2+) binding site.

It belongs to the vitamin-B12 independent methionine synthase family. The cofactor is Zn(2+).

The catalysed reaction is 5-methyltetrahydropteroyltri-L-glutamate + L-homocysteine = tetrahydropteroyltri-L-glutamate + L-methionine. It participates in amino-acid biosynthesis; L-methionine biosynthesis via de novo pathway; L-methionine from L-homocysteine (MetE route): step 1/1. Its function is as follows. Catalyzes the transfer of a methyl group from 5-methyltetrahydrofolate to homocysteine resulting in methionine formation. The polypeptide is 5-methyltetrahydropteroyltriglutamate--homocysteine methyltransferase (Bifidobacterium longum (strain NCC 2705)).